The sequence spans 638 residues: uncharacterized protein (638 aa).

Positions 1–138 constitute a CID domain; that stretch reads MDLVELDYLS…KIENALLKYK (138 aa). Disordered stretches follow at residues 318 to 338 and 615 to 638; these read QPPL…YSLS and LGKR…QESK.

This is an uncharacterized protein from Schizosaccharomyces pombe (strain 972 / ATCC 24843) (Fission yeast).